Reading from the N-terminus, the 133-residue chain is ATP synthase epsilon chain (133 aa).

This sequence belongs to the ATPase epsilon chain family. F-type ATPases have 2 components, CF(1) - the catalytic core - and CF(0) - the membrane proton channel. CF(1) has five subunits: alpha(3), beta(3), gamma(1), delta(1), epsilon(1). CF(0) has three main subunits: a, b and c.

It localises to the cell membrane. Its function is as follows. Produces ATP from ADP in the presence of a proton gradient across the membrane. This chain is ATP synthase epsilon chain, found in Clostridium botulinum (strain ATCC 19397 / Type A).